The sequence spans 236 residues: Ribose-5-phosphate isomerase A (236 aa).

Substrate-binding positions include 29-32 (SGST), 86-89 (DGAD), and 99-102 (KGGG). The active-site Proton acceptor is glutamate 108. Lysine 126 provides a ligand contact to substrate.

The protein belongs to the ribose 5-phosphate isomerase family. Homodimer.

It catalyses the reaction aldehydo-D-ribose 5-phosphate = D-ribulose 5-phosphate. The protein operates within carbohydrate degradation; pentose phosphate pathway; D-ribose 5-phosphate from D-ribulose 5-phosphate (non-oxidative stage): step 1/1. Catalyzes the reversible conversion of ribose-5-phosphate to ribulose 5-phosphate. This is Ribose-5-phosphate isomerase A from Prochlorococcus marinus (strain NATL2A).